Consider the following 72-residue polypeptide: ATP synthase subunit c (72 aa).

2 consecutive transmembrane segments (helical) span residues 1–21 (MSLG…GAGI) and 49–69 (FIGV…AFIV).

Belongs to the ATPase C chain family. As to quaternary structure, F-type ATPases have 2 components, F(1) - the catalytic core - and F(0) - the membrane proton channel. F(1) has five subunits: alpha(3), beta(3), gamma(1), delta(1), epsilon(1). F(0) has three main subunits: a(1), b(2) and c(10-14). The alpha and beta chains form an alternating ring which encloses part of the gamma chain. F(1) is attached to F(0) by a central stalk formed by the gamma and epsilon chains, while a peripheral stalk is formed by the delta and b chains.

It localises to the cell membrane. F(1)F(0) ATP synthase produces ATP from ADP in the presence of a proton or sodium gradient. F-type ATPases consist of two structural domains, F(1) containing the extramembraneous catalytic core and F(0) containing the membrane proton channel, linked together by a central stalk and a peripheral stalk. During catalysis, ATP synthesis in the catalytic domain of F(1) is coupled via a rotary mechanism of the central stalk subunits to proton translocation. Functionally, key component of the F(0) channel; it plays a direct role in translocation across the membrane. A homomeric c-ring of between 10-14 subunits forms the central stalk rotor element with the F(1) delta and epsilon subunits. In Bacillus anthracis (strain A0248), this protein is ATP synthase subunit c.